The chain runs to 236 residues: Purine nucleoside phosphorylase DeoD-type 2 (236 aa).

H5 provides a ligand contact to a purine D-ribonucleoside. Phosphate contacts are provided by residues G21, R25, R44, and 88–91 (RVGS). Residues 180–182 (DME) and 204–205 (SD) each bind a purine D-ribonucleoside. D205 (proton donor) is an active-site residue.

It belongs to the PNP/UDP phosphorylase family. In terms of assembly, homohexamer; trimer of homodimers.

The catalysed reaction is a purine D-ribonucleoside + phosphate = a purine nucleobase + alpha-D-ribose 1-phosphate. It catalyses the reaction a purine 2'-deoxy-D-ribonucleoside + phosphate = a purine nucleobase + 2-deoxy-alpha-D-ribose 1-phosphate. Functionally, catalyzes the reversible phosphorolytic breakdown of the N-glycosidic bond in the beta-(deoxy)ribonucleoside molecules, with the formation of the corresponding free purine bases and pentose-1-phosphate. This chain is Purine nucleoside phosphorylase DeoD-type 2, found in Vibrio vulnificus (strain CMCP6).